The chain runs to 594 residues: Protein wntless (594 aa).

Over 1–13 (MSGTILENLSGRK) the chain is Cytoplasmic. A helical transmembrane segment spans residues 14–34 (LSILVATLLLCQVLCFLLGGL). At 35–239 (YAPLPAGHVT…AIHQNGGFTQ (205 aa)) the chain is on the lumenal side. N-linked (GlcNAc...) asparagine glycosylation occurs at N58. A helical transmembrane segment spans residues 240–260 (IWLLLKTMLFPFVVGIMIWFW). Topologically, residues 261–270 (RRVHLLQRSP) are cytoplasmic. The helical transmembrane segment at 271 to 291 (ALLEYMLIYLGAALTFLNLPL) threads the bilayer. Residues 292–311 (EYLSLVYEMPYMLLLSDIRQ) are Lumenal-facing. The helical transmembrane segment at 312–332 (GIFYAMLLTFWLVFAGEHMLI) threads the bilayer. Over 333–344 (QDAPNKSTIRSR) the chain is Cytoplasmic. Residues 345 to 365 (YWKHLSAVVVGCISLFVFDIC) traverse the membrane as a helical segment. The Lumenal segment spans residues 366 to 390 (ERGVQLRNPFYSIWTTPLGAKVAMT). A helical transmembrane segment spans residues 391 to 411 (FIVLAGVSAAIYFLFLCYMIW). At 412–473 (KVFRNIGDKR…ANESKGLIYR (62 aa)) the chain is on the cytoplasmic side. Residues 474–494 (FKFLMLATLVCAALTVAGFIM) traverse the membrane as a helical segment. At 495–514 (GQMAEGQWDWNDNVAIQPTS) the chain is on the lumenal side. The chain crosses the membrane as a helical span at residues 515 to 535 (AFLTGVYGMWNIYIFALLILY). Topologically, residues 536 to 594 (APSHKQWPTMHHSDETTQSNENIVASAASEEIEFSHLPSDSNPSEISSLTSFTRKVAFD) are cytoplasmic. Positions 571–594 (HLPSDSNPSEISSLTSFTRKVAFD) are disordered. Over residues 573–588 (PSDSNPSEISSLTSFT) the composition is skewed to polar residues.

Belongs to the wntless family. As to quaternary structure, interacts with wg; in the Golgi. Interacts with Vps35, a component of the retromer complex; wls stability is regulated by Vps35. As to expression, ubiquitously expressed in the wing imaginal disk, increased expression is observed in a stripe at the dorso-ventral boundary and other regions of the wing disk that express wg. Also expresses in the leg imaginal disk. During larval development, expression is seen in both motorneurons and muscle.

It localises to the presynaptic cell membrane. The protein resides in the postsynaptic cell membrane. It is found in the cell membrane. Its subcellular location is the endosome membrane. The protein localises to the endoplasmic reticulum membrane. It localises to the golgi apparatus membrane. Functionally, a segment polarity gene required for wingless (wg)-dependent patterning processes, acting in both wg-sending cells and wg-target cells. In non-neuronal cells wls directs wg secretion. The wls traffic loop encompasses the Golgi, the cell surface, an endocytic compartment and a retrograde route leading back to the Golgi, and involves clathrin-mediated endocytosis and the retromer complex (a conserved protein complex consisting of Vps35 and Vps26). In neuronal cells (the larval motorneuron NMJ), the wg signal moves across the synapse via the release of wls-containing exosome-like vesicles. Postsynaptic wls is required for the trafficking of fz2 through the fz2-interacting protein Grip. In Drosophila melanogaster (Fruit fly), this protein is Protein wntless.